The sequence spans 200 residues: UPF0301 protein BOV_0485 (200 aa).

The protein belongs to the UPF0301 (AlgH) family.

This is UPF0301 protein BOV_0485 from Brucella ovis (strain ATCC 25840 / 63/290 / NCTC 10512).